The following is a 135-amino-acid chain: ARGOS-like protein (135 aa).

The interval 71–122 (FSLESMVVLVGLTASLLILPLILPPLPPPPFMLLLIPIGIMVLLMVLAFMPS) is organ Size Related (OSR) domain. The next 2 helical transmembrane spans lie at 76–96 (MVVL…LPPL) and 100–120 (PFML…LAFM).

The protein belongs to the plant organ size related (OSR) protein family. Expressed in cotyledons, roots, flowers, siliques and leaves.

It localises to the membrane. Its subcellular location is the nucleus. The protein resides in the cytoplasm. The protein localises to the endoplasmic reticulum. Its function is as follows. Promotes cell expansion-dependent organ growth, probably via a brassinosteroids signaling pathway. Acts downstream of BRI1. The protein is ARGOS-like protein (ARL) of Arabidopsis thaliana (Mouse-ear cress).